Here is a 101-residue protein sequence, read N- to C-terminus: Integration host factor subunit alpha (101 aa).

It belongs to the bacterial histone-like protein family. In terms of assembly, heterodimer of an alpha and a beta chain.

This protein is one of the two subunits of integration host factor, a specific DNA-binding protein that functions in genetic recombination as well as in transcriptional and translational control. In Maricaulis maris (strain MCS10) (Caulobacter maris), this protein is Integration host factor subunit alpha.